The following is a 215-amino-acid chain: MQHHACSPPRLILASSSRYRRELLERLRVPFDVVAPEIDETPLPDETPCATALRLAAAKARAAAERARAPHGALVIGSDQVATFDGLQIGKPGTHARALAQLQAMRGRDVEFHSALCLYDSRSGATQSEDIVTRVRFRTLTDVELDAYLRAETPYDVAGSAKSEGLGIALLDAIDSDDPTALVGLPLIALTRMLRAAGYPLFGAPAPAADGVNGR.

Catalysis depends on Asp-79, which acts as the Proton acceptor.

This sequence belongs to the Maf family. YceF subfamily. The cofactor is a divalent metal cation.

The protein resides in the cytoplasm. The catalysed reaction is N(7)-methyl-GTP + H2O = N(7)-methyl-GMP + diphosphate + H(+). Nucleoside triphosphate pyrophosphatase that hydrolyzes 7-methyl-GTP (m(7)GTP). May have a dual role in cell division arrest and in preventing the incorporation of modified nucleotides into cellular nucleic acids. The protein is 7-methyl-GTP pyrophosphatase of Burkholderia mallei (strain ATCC 23344).